We begin with the raw amino-acid sequence, 648 residues long: Solute carrier family 23 member 2 (648 aa).

Residues 1-21 form a disordered region; sequence MMGIGKNTASKSVEAGGSTEG. Topologically, residues 9 to 110 are cytoplasmic; it reads ASKSVEAGGS…LCIFLGLQHY (102 aa). Ser70 carries the post-translational modification Phosphoserine. At Thr75 the chain carries Phosphothreonine. Position 78 is a phosphoserine (Ser78). The residue at position 79 (Thr79) is a Phosphothreonine. Ser81 carries the post-translational modification Phosphoserine. Residues 111 to 131 traverse the membrane as a helical segment; it reads LTCFSGTIAVPFLLADAMCVG. The Extracellular portion of the chain corresponds to 132-139; that stretch reads DDQWATSQ. A helical membrane pass occupies residues 140–160; it reads LIGTIFFCVGITTLLQTTFGC. Residue Arg161 is a topological domain, cytoplasmic. A helical transmembrane segment spans residues 162–182; sequence LPLFQASAFAFLAPARAILSL. Residues 183–216 lie on the Extracellular side of the membrane; that stretch reads DKWKCNTTEITVANGTAELLEHIWHPRIQEIQGA. Residues Asn188 and Asn196 are each glycosylated (N-linked (GlcNAc...) asparagine). A helical membrane pass occupies residues 217-237; that stretch reads IIMSSLIEVVIGLLGLPGALL. The Cytoplasmic portion of the chain corresponds to 238–264; that stretch reads RYIGPLTITPTVALIGLSGFQAAGERA. Residues 265 to 282 traverse the membrane as a helical segment; that stretch reads GKHWGIAMLTIFLVLLFS. Residues 283–286 are Extracellular-facing; sequence QYAR. Residues 287-300 constitute an intramembrane region (helical); that stretch reads NVKFPLPIYKSKKG. Residues 301–307 lie on the Extracellular side of the membrane; sequence WTAYKFQ. A helical membrane pass occupies residues 308–328; it reads LFKMFPIILAILVSWLLCFIF. The Cytoplasmic portion of the chain corresponds to 329 to 369; the sequence is TVTDVFPSNSTDYGYYARTDARKGVLLVAPWFKVPYPFQWG. Residues 370–390 form a helical membrane-spanning segment; it reads MPTVSAAGVIGMLSAVVASII. The Extracellular portion of the chain corresponds to 391 to 415; that stretch reads ESIGDYYACARLSCAPPPPIHAINR. The helical transmembrane segment at 416-436 threads the bilayer; the sequence is GIFVEGLSCVLDGIFGTGNGS. At 437-459 the chain is on the cytoplasmic side; sequence TSSSPNIGVLGITKVGSRRVIQY. The chain crosses the membrane as a helical span at residues 460–480; that stretch reads GAALMLGLGMVGKFSALFASL. At 481–483 the chain is on the extracellular side; that stretch reads PDP. The chain crosses the membrane as a helical span at residues 484–504; the sequence is VLGALFCTLFGMITAVGLSNL. Topologically, residues 505 to 514 are cytoplasmic; the sequence is QFIDLNSSRN. The helical transmembrane segment at 515–535 threads the bilayer; that stretch reads LFVLGFSIFFGLVLPSYLRQN. Residues 536–545 are Extracellular-facing; it reads PLVTGITGID. Residues 546 to 566 form a helical membrane-spanning segment; that stretch reads QILNVLLTTAMFVGGCVAFIL. Residues 567–648 lie on the Cytoplasmic side of the membrane; the sequence is DNTIPGTPEE…SSDKDSQATV (82 aa). Position 647 is a phosphothreonine (Thr647).

The protein belongs to the nucleobase:cation symporter-2 (NCS2) (TC 2.A.40) family. In terms of assembly, interacts with CLSTN3. Phosphorylated. In terms of tissue distribution, expressed in metabolically active and specialized tissues, including high expression in brain and adrenals. Detected in a wide range of tissues. Expression in kidney is almost undetectable.

The protein localises to the cell membrane. It catalyses the reaction L-ascorbate(out) + 2 Na(+)(out) = L-ascorbate(in) + 2 Na(+)(in). Functionally, sodium/ascorbate cotransporter. Mediates electrogenic uptake of vitamin C, with a stoichiometry of 2 Na(+) for each ascorbate. This chain is Solute carrier family 23 member 2 (Slc23a2), found in Mus musculus (Mouse).